Consider the following 464-residue polypeptide: Trigger factor (464 aa).

The 88-residue stretch at glycine 169–proline 256 folds into the PPIase FKBP-type domain.

Belongs to the FKBP-type PPIase family. Tig subfamily.

The protein localises to the cytoplasm. It catalyses the reaction [protein]-peptidylproline (omega=180) = [protein]-peptidylproline (omega=0). Functionally, involved in protein export. Acts as a chaperone by maintaining the newly synthesized protein in an open conformation. Functions as a peptidyl-prolyl cis-trans isomerase. This Microcystis aeruginosa (strain NIES-843 / IAM M-2473) protein is Trigger factor.